We begin with the raw amino-acid sequence, 343 residues long: Ribonucleoside-diphosphate reductase small subunit (343 aa).

Positions 101, 131, and 134 each coordinate Fe cation. The active site involves Tyr138. The chain crosses the membrane as a helical span at residues 188-208; sequence ILMILIEGIFFSASFAAIAYL. Residues Glu194, Glu228, and His231 each coordinate Fe cation.

This sequence belongs to the ribonucleoside diphosphate reductase small chain family. In terms of assembly, heterotetramer composed of a homodimer of the large subunit (R1) and a homodimer of the small subunit (R2). Larger multisubunit protein complex are also active, composed of (R1)n(R2)n. Requires Fe cation as cofactor.

The protein resides in the host membrane. The enzyme catalyses a 2'-deoxyribonucleoside 5'-diphosphate + [thioredoxin]-disulfide + H2O = a ribonucleoside 5'-diphosphate + [thioredoxin]-dithiol. Ribonucleoside-diphosphate reductase holoenzyme provides the precursors necessary for viral DNA synthesis. Allows virus growth in non-dividing cells, as well as reactivation from latency in infected hosts. Catalyzes the biosynthesis of deoxyribonucleotides from the corresponding ribonucleotides. In Gallid herpesvirus 2 (strain Chicken/Md5/ATCC VR-987) (GaHV-2), this protein is Ribonucleoside-diphosphate reductase small subunit.